The following is a 1077-amino-acid chain: Zinc finger protein 518B (1077 aa).

Polar residues predominate over residues 9 to 30; sequence YTTQVNGGPSSLTMSPKQPNRA. Residues 9 to 35 are disordered; the sequence is YTTQVNGGPSSLTMSPKQPNRATRTER. 2 consecutive C2H2-type zinc fingers follow at residues 160-182 and 188-211; these read FICS…LVKH and YRCE…RRVH. Residues 372–397 form a disordered region; the sequence is TSRGDGGTSECLSTEKGSGGQKKMLS. Lys479 participates in a covalent cross-link: Glycyl lysine isopeptide (Lys-Gly) (interchain with G-Cter in SUMO2). 4 disordered regions span residues 561-585, 599-622, 675-739, and 825-852; these read LVSS…GQVS, GEDK…ETAG, KPSS…GSRQ, and QPLT…RKED. Residues 564–574 show a composition bias toward basic and acidic residues; that stretch reads SDRKLEDKQME. 2 stretches are compositionally biased toward polar residues: residues 605-621 and 675-688; these read SQQP…SETA and KPSS…QRRS. Glycyl lysine isopeptide (Lys-Gly) (interchain with G-Cter in SUMO2) cross-links involve residues Lys847 and Lys861. Residues 895 to 914 are disordered; the sequence is QVNSTKKKNKMQANPGRYFK. Residues 1039 to 1061 form a C2H2-type 3 zinc finger; the sequence is FKCWFCGRLYEDQEEWMSHGQRH.

This sequence belongs to the krueppel C2H2-type zinc-finger protein family.

It localises to the nucleus. Its function is as follows. Through its association with the EHMT1-EHMT2/G9A and PRC2/EED-EZH2 histone methyltransferase complexes may function in gene silencing, regulating repressive post-translational methylation of histone tails at promoters of target genes. This Mus musculus (Mouse) protein is Zinc finger protein 518B (Znf518b).